A 130-amino-acid chain; its full sequence is Dihydroneopterin aldolase (130 aa).

Substrate is bound by residues Glu-22, Tyr-54, and 73–74 (IE). Residue Lys-100 is the Proton donor/acceptor of the active site.

The protein belongs to the DHNA family.

The catalysed reaction is 7,8-dihydroneopterin = 6-hydroxymethyl-7,8-dihydropterin + glycolaldehyde. It participates in cofactor biosynthesis; tetrahydrofolate biosynthesis; 2-amino-4-hydroxy-6-hydroxymethyl-7,8-dihydropteridine diphosphate from 7,8-dihydroneopterin triphosphate: step 3/4. Catalyzes the conversion of 7,8-dihydroneopterin to 6-hydroxymethyl-7,8-dihydropterin. This chain is Dihydroneopterin aldolase (folB), found in Methylorubrum extorquens (strain ATCC 14718 / DSM 1338 / JCM 2805 / NCIMB 9133 / AM1) (Methylobacterium extorquens).